Here is a 230-residue protein sequence, read N- to C-terminus: Phosducin-like protein 1 (230 aa).

An N-acetylmethionine modification is found at M1. In terms of domain architecture, Phosducin spans 16 to 166 (AEKDKHTTVD…VVGYKNGLEK (151 aa)). A coiled-coil region spans residues 25-79 (DSDDKSSGEENLDELLNELDRELDEDHEFLSAYRSERLQQISDHLKQVKKNVEDD). The segment at 81–230 (YGRLQCIDNE…RSESDSDLDI (150 aa)) is thioredoxin fold.

The protein belongs to the phosducin family. In terms of assembly, interacts with the G protein beta-gamma subunit complex (STE4-STE18 complex).

It localises to the cytoplasm. Not essential for growth. Inhibits early G-protein signaling events following pheromone stimulation. May help create heterodimerizable beta-tubulin by facilitating the efficient transfer of nascent beta-tubulin polypeptides to the folding apparatus. The sequence is that of Phosducin-like protein 1 (PLP1) from Saccharomyces cerevisiae (strain ATCC 204508 / S288c) (Baker's yeast).